We begin with the raw amino-acid sequence, 396 residues long: S-adenosylmethionine decarboxylase proenzyme (396 aa).

Residues E29 and E32 contribute to the active site. The Schiff-base intermediate with substrate; via pyruvic acid role is filled by S88. A Pyruvic acid (Ser); by autocatalysis modification is found at S88. C102 functions as the Proton donor; for catalytic activity in the catalytic mechanism. Residues S287 and H301 each act as proton acceptor; for processing activity in the active site.

Belongs to the eukaryotic AdoMetDC family. The cofactor is pyruvate. In terms of processing, is synthesized initially as an inactive proenzyme. Formation of the active enzyme involves a self-maturation process in which the active site pyruvoyl group is generated from an internal serine residue via an autocatalytic post-translational modification. Two non-identical subunits are generated from the proenzyme in this reaction, and the pyruvate is formed at the N-terminus of the alpha chain, which is derived from the carboxyl end of the proenzyme. The post-translation cleavage follows an unusual pathway, termed non-hydrolytic serinolysis, in which the side chain hydroxyl group of the serine supplies its oxygen atom to form the C-terminus of the beta chain, while the remainder of the serine residue undergoes an oxidative deamination to produce ammonia and the pyruvoyl group blocking the N-terminus of the alpha chain.

It carries out the reaction S-adenosyl-L-methionine + H(+) = S-adenosyl 3-(methylsulfanyl)propylamine + CO2. It functions in the pathway amine and polyamine biosynthesis; S-adenosylmethioninamine biosynthesis; S-adenosylmethioninamine from S-adenosyl-L-methionine: step 1/1. Its function is as follows. Catalyzes the decarboxylation of S-adenosylmethionine, a key step in the biosynthetic pathway for spermidine and spermine. It is essential for normal growth, sporulation, and maintenance of ds-RNA virus. This Saccharomyces cerevisiae (strain ATCC 204508 / S288c) (Baker's yeast) protein is S-adenosylmethionine decarboxylase proenzyme (SPE2).